A 140-amino-acid chain; its full sequence is Large ribosomal subunit protein uL11 (140 aa).

The protein belongs to the universal ribosomal protein uL11 family. Part of the ribosomal stalk of the 50S ribosomal subunit. Interacts with L10 and the large rRNA to form the base of the stalk. L10 forms an elongated spine to which L12 dimers bind in a sequential fashion forming a multimeric L10(L12)X complex. Post-translationally, one or more lysine residues are methylated.

In terms of biological role, forms part of the ribosomal stalk which helps the ribosome interact with GTP-bound translation factors. The chain is Large ribosomal subunit protein uL11 from Symbiobacterium thermophilum (strain DSM 24528 / JCM 14929 / IAM 14863 / T).